The chain runs to 234 residues: MAKLTKRMRVIRDKVDSTKQYDINEAVALLKELATAKFVESVDVAVNLGIDARKSDQNVRGATVLPHGTGRSVRVAVFAQGANAEAAKAAGAELVGMEDLADQIKKGEMNFDVVIASPDAMRVVGQLGQVLGPRGLMPNPKVGTVTPNVAEAVKNAKAGQVRYRNDKNGIIHTTIGKVDFDTDKLKENLESLLVALKKAKPSQAKGVFIKKVSLSTTMGAGVAVDQAGLNASAA.

It belongs to the universal ribosomal protein uL1 family. As to quaternary structure, part of the 50S ribosomal subunit.

Its function is as follows. Binds directly to 23S rRNA. The L1 stalk is quite mobile in the ribosome, and is involved in E site tRNA release. In terms of biological role, protein L1 is also a translational repressor protein, it controls the translation of the L11 operon by binding to its mRNA. The protein is Large ribosomal subunit protein uL1 of Erwinia tasmaniensis (strain DSM 17950 / CFBP 7177 / CIP 109463 / NCPPB 4357 / Et1/99).